Here is a 247-residue protein sequence, read N- to C-terminus: UPF0659 protein C216.03 (247 aa).

The protein belongs to the UPF0659 family.

It is found in the cytoplasm. Its subcellular location is the nucleus. The polypeptide is UPF0659 protein C216.03 (Schizosaccharomyces pombe (strain 972 / ATCC 24843) (Fission yeast)).